An 83-amino-acid polypeptide reads, in one-letter code: Cell division topological specificity factor (83 aa).

Belongs to the MinE family.

Functionally, prevents the cell division inhibition by proteins MinC and MinD at internal division sites while permitting inhibition at polar sites. This ensures cell division at the proper site by restricting the formation of a division septum at the midpoint of the long axis of the cell. The protein is Cell division topological specificity factor of Alcanivorax borkumensis (strain ATCC 700651 / DSM 11573 / NCIMB 13689 / SK2).